We begin with the raw amino-acid sequence, 424 residues long: Histidine--tRNA ligase (424 aa).

The protein belongs to the class-II aminoacyl-tRNA synthetase family. In terms of assembly, homodimer.

The protein localises to the cytoplasm. The catalysed reaction is tRNA(His) + L-histidine + ATP = L-histidyl-tRNA(His) + AMP + diphosphate + H(+). The chain is Histidine--tRNA ligase from Shigella flexneri.